The sequence spans 706 residues: K(+)-insensitive pyrophosphate-energized proton pump (706 aa).

A run of 5 helical transmembrane segments spans residues 1 to 21, 62 to 82, 83 to 103, 129 to 149, and 164 to 184; these read MTAL…AIWA, VVIF…GFAI, GAIL…RANV, LLVA…LIHF, and VALG…GGIF. Position 186 (lysine 186) interacts with substrate. Residues aspartate 189, aspartate 193, asparagine 216, and aspartate 219 each contribute to the Mg(2+) site. The next 6 helical transmembrane spans lie at 231–251, 263–283, 300–320, 330–350, 393–413, and 414–434; these read LFET…IFFG, TLPL…TFFV, IATG…LIGF, GLAL…IIWI, IVII…GIAI, and ATTT…FGPV. Aspartate 436 is a Mg(2+) binding site. Transmembrane regions (helical) follow at residues 467 to 487, 516 to 536, 585 to 605, and 616 to 636; these read AVTK…LFAA, YVVV…AMGM, IIPS…IYAI, and AFSA…FVAI. 3 residues coordinate Ca(2+): aspartate 646, aspartate 672, and aspartate 676. Residue lysine 679 participates in substrate binding. The helical transmembrane segment at 685-705 threads the bilayer; sequence AVNPMIKITNIVALLLLAILA.

Belongs to the H(+)-translocating pyrophosphatase (TC 3.A.10) family. K(+)-insensitive subfamily. As to quaternary structure, homodimer. The cofactor is Mg(2+).

The protein localises to the cell inner membrane. It carries out the reaction diphosphate + H2O + H(+)(in) = 2 phosphate + 2 H(+)(out). Its function is as follows. Proton pump that utilizes the energy of pyrophosphate hydrolysis as the driving force for proton movement across the membrane. Generates a proton motive force. This is K(+)-insensitive pyrophosphate-energized proton pump from Rhodopseudomonas palustris (strain ATCC BAA-98 / CGA009).